A 311-amino-acid polypeptide reads, in one-letter code: Protein nfe2 (311 aa).

In terms of biological role, responsible for the nodulation efficiency and competitive ability of strain GR4 on alfalfa roots. The polypeptide is Protein nfe2 (nfe2) (Rhizobium meliloti (Ensifer meliloti)).